The primary structure comprises 442 residues: Matrix remodeling-associated protein 8 (442 aa).

The first 19 residues, 1–19, serve as a signal peptide directing secretion; the sequence is MELLSRVLLWKLLLLQSSA. The Extracellular segment spans residues 20–340; sequence VLSSGPSGTA…PEDHTHFFQQ (321 aa). Ig-like V-type domains are found at residues 25 to 156 and 159 to 291; these read PSGT…LEVT and PLLS…LQVT. 2 cysteine pairs are disulfide-bonded: Cys-53–Cys-136 and Cys-185–Cys-271. N-linked (GlcNAc...) asparagine glycosylation is present at Asn-118. Residues 128-130 carry the RGD 1 motif; the sequence is RGD. Ser-227 bears the Phosphoserine mark. Positions 251-253 match the RGD 2 motif; the sequence is RGD. The segment at 296–319 is disordered; the sequence is EPPARASPGNGSGHSSAPSPDPTL. A glycan (N-linked (GlcNAc...) asparagine) is linked at Asn-305. Residues 341 to 361 form a helical membrane-spanning segment; sequence LGYVLATLLLFILLLITVVLA. Residues 362–442 are Cytoplasmic-facing; that stretch reads TRYRHSGGCK…DKEFRKEYCK (81 aa).

As to quaternary structure, homodimer in cis. Does not appear to form trans-homodimers. Interacts with ITGB3; the interaction inhibits ITGAV:ITGB3 heterodimer formation. Widely expressed (at protein level). Highly expressed in brain where it localizes to the glia limitans, which is formed by the endfeet of astrocytes surrounding capillaries, and beneath the pia mater (at protein level). In lung, detected in epithelial cells of the bronchus (at protein level). Expressed in intercalated disks in the heart (at protein level). Detected in pancreatic alpha-cells in the islet of Langerhans (at protein level). In kidney, found in the brush border of the proximal convoluted tubule (at protein level). Expressed in the epithelium of the small intestine (at protein level). Weakly expressed in liver (at protein level). Detected in myeloid cells.

The protein localises to the cell membrane. Its subcellular location is the cell junction. The protein resides in the tight junction. It is found in the cytoplasm. It localises to the cell projection. The protein localises to the cilium membrane. Its subcellular location is the nucleus. Its function is as follows. Transmembrane protein which can modulate activity of various signaling pathways, probably via binding to integrin ITGAV:ITGB3. Mediates heterophilic cell-cell interactions in vitro. Inhibits osteoclastogenesis downstream of TNFSF11/RANKL and CSF1, where it may function by attenuating signaling via integrin ITGB3 and MAP kinase p38. Plays a role in cartilage formation where it promotes proliferation and maturation of growth plate chondrocytes. Stimulates formation of primary cilia in chondrocytes. Enhances expression of genes involved in the hedgehog signaling pathway in chondrocytes, including the hedgehog signaling molecule IHH; may also promote signaling via the PTHLH/PTHrP pathway. Plays a role in angiogenesis where it suppresses migration of endothelial cells and also promotes their apoptosis. Inhibits VEGF-induced activation of AKT and p38 MAP kinase in endothelial cells. Also inhibits VTN (vitronectin)-mediated integrin ITGAV:ITGB3 signaling and activation of PTK2/FAK. May play a role in the maturation and maintenance of the blood-brain barrier. This Mus musculus (Mouse) protein is Matrix remodeling-associated protein 8.